The chain runs to 966 residues: Leucine--tRNA ligase (966 aa).

The 'HIGH' region motif lies at proline 41–histidine 51. A 'KMSKS' region motif is present at residues lysine 632–serine 636. ATP is bound at residue lysine 635.

The protein belongs to the class-I aminoacyl-tRNA synthetase family.

The protein localises to the cytoplasm. The catalysed reaction is tRNA(Leu) + L-leucine + ATP = L-leucyl-tRNA(Leu) + AMP + diphosphate. This Methanosarcina barkeri (strain Fusaro / DSM 804) protein is Leucine--tRNA ligase.